Reading from the N-terminus, the 694-residue chain is Methionine--tRNA ligase (694 aa).

A 'HIGH' region motif is present at residues 14-24 (PYANGPIHLGH). Zn(2+)-binding residues include cysteine 145, cysteine 148, cysteine 158, and cysteine 161. Residues 330 to 334 (KMSKS) carry the 'KMSKS' region motif. Lysine 333 serves as a coordination point for ATP. Residues 558–579 (SLQATAGQPEPHSQVRHAEHQQ) form a disordered region. Positions 593 to 694 (DFAKVDLRIA…EGAQPGMKVK (102 aa)) constitute a tRNA-binding domain.

It belongs to the class-I aminoacyl-tRNA synthetase family. MetG type 1 subfamily. Homodimer. Requires Zn(2+) as cofactor.

It is found in the cytoplasm. It catalyses the reaction tRNA(Met) + L-methionine + ATP = L-methionyl-tRNA(Met) + AMP + diphosphate. Functionally, is required not only for elongation of protein synthesis but also for the initiation of all mRNA translation through initiator tRNA(fMet) aminoacylation. This Methylococcus capsulatus (strain ATCC 33009 / NCIMB 11132 / Bath) protein is Methionine--tRNA ligase.